Consider the following 727-residue polypeptide: Protein EXECUTER 1, chloroplastic (727 aa).

Disordered regions lie at residues 1-51 (MAAA…SRLF), 65-102 (LAGA…AGSG), 340-381 (ISSS…LPSD), and 413-455 (DEDD…SGDE). The transit peptide at 1-83 (MAAAVSTAPR…PRRRVSSVVR (83 aa)) directs the protein to the chloroplast. Low complexity-rich tracts occupy residues 19-33 (SSSC…ASMS) and 42-51 (PSSGSGSRLF). The segment covering 413 to 441 (DEDDENDNPEDEIESSEDIGDGDNVEEAE) has biased composition (acidic residues).

The protein resides in the plastid. It localises to the chloroplast. In terms of biological role, together with EX2, enables higher plants to perceive singlet oxygen as a stress signal in plastid that activates a genetically determined nuclear stress response program which triggers a programmed cell death (PCD). This transfer of singlet oxygen-induced stress-related signals from the plastid to the nucleus that triggers genetically controlled PCD pathway is unique to photosynthetic eukaryotes and operates under mild stress conditions, impeding photosystem II (PSII) without causing photooxidative damage of the plant. The protein is Protein EXECUTER 1, chloroplastic of Oryza sativa subsp. japonica (Rice).